The following is a 468-amino-acid chain: Pentatricopeptide repeat-containing protein At5g46680 (468 aa).

12 PPR repeats span residues serine 12 to proline 46, aspartate 47 to proline 81, aspartate 82 to proline 116, aspartate 117 to proline 152, glycine 153 to arginine 183, glutamate 187 to proline 221, asparagine 222 to phenylalanine 256, aspartate 257 to serine 291, aspartate 293 to proline 327, aspartate 328 to proline 362, serine 363 to arginine 393, and aspartate 394 to isoleucine 428.

Belongs to the PPR family. P subfamily.

The sequence is that of Pentatricopeptide repeat-containing protein At5g46680 from Arabidopsis thaliana (Mouse-ear cress).